A 286-amino-acid chain; its full sequence is MTALTESSTSKFVKINEKGFSDFNIHYNEAGNGETVIMLHGGGPGAGGWSNYYRNVGPFVDAGYRVILKDSPGFNKSDAVVMDEQRGLVNARAVKGLMDALDIDRAHLVGNSMGGATALNFALEYPDRIGKLILMGPGGLGPSMFAPMPMEGIKLLFKLYAEPSYETLKQMLQVFLYDQSLITEELLQGRWEAIQRQPEHLKNFLISAQKAPLSTWDVTARLGEIKAKTFITWGRDDRFVPLDHGLKLLWNIDDARLHVFSKCGHWAQWEHADEFNRLVIDFLRHA.

Substrate is bound by residues 42-43 (GG), Asn51, Asn111, Ser180, and Arg190. His265 functions as the Proton acceptor in the catalytic mechanism. A substrate-binding site is contributed by Trp266.

This sequence belongs to the AB hydrolase superfamily. BphD family. As to quaternary structure, homodimer.

The catalysed reaction is 2,6-dioxo-6-phenylhexa-3-enoate + H2O = 2-oxopent-4-enoate + benzoate + H(+). Its pathway is xenobiotic degradation; biphenyl degradation; 2-hydroxy-2,4-pentadienoate and benzoate from biphenyl: step 4/4. Its activity is regulated as follows. Inhibited by 3-Cl HOPDA. Functionally, catalyzes an unusual C-C bond hydrolysis of 2-hydroxy-6-oxo-6-phenylhexa-2,4-dienoic acid (HOPDA) to produce benzoic acid and 2-hydroxy-2,4-pentadienoic acid (HPD). In Paraburkholderia xenovorans (strain LB400), this protein is 2-hydroxy-6-oxo-6-phenylhexa-2,4-dienoate hydrolase (bphD).